The sequence spans 826 residues: Periplasmic nitrate reductase (826 aa).

Positions 1-32 (MSISRREFLKANAAVAAATAVGATLPVKIVEA) form a signal peptide, tat-type signal. One can recognise a 4Fe-4S Mo/W bis-MGD-type domain in the interval 39 to 95 (IKWDKAPCRFCGVGCSVLVGTDNGKVVATKGDPESPVNKGLNCIKGYFLSKIMYGKD). [4Fe-4S] cluster-binding residues include cysteine 46, cysteine 49, cysteine 53, and cysteine 81. Mo-bis(molybdopterin guanine dinucleotide) is bound by residues lysine 83, glutamine 150, asparagine 175, cysteine 179, 212–219 (WGANMAEM), 262–264 (QSD), methionine 372, glutamine 376, asparagine 482, 508–509 (SD), lysine 531, aspartate 558, and 716–725 (TGRVLEHWHT). Phenylalanine 792 is a substrate binding site. Mo-bis(molybdopterin guanine dinucleotide)-binding residues include asparagine 800 and lysine 817.

It belongs to the prokaryotic molybdopterin-containing oxidoreductase family. NasA/NapA/NarB subfamily. In terms of assembly, component of the periplasmic nitrate reductase NapAB complex composed of NapA and NapB. Requires [4Fe-4S] cluster as cofactor. It depends on Mo-bis(molybdopterin guanine dinucleotide) as a cofactor. Predicted to be exported by the Tat system. The position of the signal peptide cleavage has not been experimentally proven.

The protein localises to the periplasm. It carries out the reaction 2 Fe(II)-[cytochrome] + nitrate + 2 H(+) = 2 Fe(III)-[cytochrome] + nitrite + H2O. In terms of biological role, catalytic subunit of the periplasmic nitrate reductase complex NapAB. Receives electrons from NapB and catalyzes the reduction of nitrate to nitrite. The sequence is that of Periplasmic nitrate reductase from Shewanella halifaxensis (strain HAW-EB4).